The sequence spans 282 residues: MSSYANHQALAGLTLGKSTDYRDTYDASLLQGVPRSLNRDPLGLKADNLPFHGTDIWTLYELSWLNAKGLPQVAVGHVELDYTSVNLIESKSFKLYLNSFNQTRFNNWDEVRQTLERDLSTCAQGKVSVALYRLDELEGQPIGHFNGTCIDDQDITIDNYEFTTDYLENATSGEKVVEETLVSHLLKSNCLITHQPDWGSIQIQYRGRQIDREKLLRYLVSFRHHNEFHEQCVERIFNDLLRFCQPEKLSVYARYTRRGGLDINPWRSNNDFVPSTTRLVRQ.

88-90 contacts substrate; sequence IES. Residue 90–91 coordinates NADPH; sequence SK. Cys-190 functions as the Thioimide intermediate in the catalytic mechanism. Asp-197 (proton donor) is an active-site residue. 229 to 230 is a binding site for substrate; that stretch reads HE. 258–259 contributes to the NADPH binding site; that stretch reads RG.

Belongs to the GTP cyclohydrolase I family. QueF type 2 subfamily. In terms of assembly, homodimer.

The protein resides in the cytoplasm. The enzyme catalyses 7-aminomethyl-7-carbaguanine + 2 NADP(+) = 7-cyano-7-deazaguanine + 2 NADPH + 3 H(+). Its pathway is tRNA modification; tRNA-queuosine biosynthesis. Functionally, catalyzes the NADPH-dependent reduction of 7-cyano-7-deazaguanine (preQ0) to 7-aminomethyl-7-deazaguanine (preQ1). This chain is NADPH-dependent 7-cyano-7-deazaguanine reductase, found in Escherichia coli O81 (strain ED1a).